Reading from the N-terminus, the 140-residue chain is Small ribosomal subunit protein bS16 (140 aa).

The tract at residues 86–140 is disordered; that stretch reads TVGKAKQAAKREEEAKQAAKEAAEAKAAAEAEAAAAAEAAKAEDAPDGETESSEG. A compositionally biased stretch (basic and acidic residues) spans 94 to 114; it reads AKREEEAKQAAKEAAEAKAAA. The span at 115–124 shows a compositional bias: low complexity; that stretch reads EAEAAAAAEA. A compositionally biased stretch (acidic residues) spans 130–140; that stretch reads APDGETESSEG.

The protein belongs to the bacterial ribosomal protein bS16 family.

This chain is Small ribosomal subunit protein bS16, found in Parasynechococcus marenigrum (strain WH8102).